Consider the following 390-residue polypeptide: S-adenosylmethionine synthase 4 (390 aa).

A Mg(2+)-binding site is contributed by Glu9. His15 is a binding site for ATP. Position 43 (Glu43) interacts with K(+). Residues Glu56 and Gln99 each coordinate L-methionine. ATP contacts are provided by residues Asp167–Lys169, Ser235–Phe238, Asp246, Arg252–Lys253, Ala269, Lys273, and Lys277. Residue Asp246 coordinates L-methionine. Lys277 lines the L-methionine pocket.

Belongs to the AdoMet synthase family. As to quaternary structure, homotetramer. Requires Mn(2+) as cofactor. It depends on Mg(2+) as a cofactor. The cofactor is Co(2+). K(+) is required as a cofactor. Mostly expressed in flowers, seedpods and roots, and, to a lower extent, in stems and leaves.

It localises to the cytoplasm. It carries out the reaction L-methionine + ATP + H2O = S-adenosyl-L-methionine + phosphate + diphosphate. It functions in the pathway amino-acid biosynthesis; S-adenosyl-L-methionine biosynthesis; S-adenosyl-L-methionine from L-methionine: step 1/1. Functionally, catalyzes the formation of S-adenosylmethionine from methionine and ATP. The reaction comprises two steps that are both catalyzed by the same enzyme: formation of S-adenosylmethionine (AdoMet) and triphosphate, and subsequent hydrolysis of the triphosphate. This is S-adenosylmethionine synthase 4 (MSAMS4) from Brassica juncea (Indian mustard).